A 110-amino-acid chain; its full sequence is Insulin (110 aa).

Positions 1–24 are cleaved as a signal peptide; that stretch reads MALWMRLLPLLALLALWAPAPTRA. 3 disulfide bridges follow: C31/C96, C43/C109, and C95/C100. Residues 57-87 constitute a propeptide, c peptide; the sequence is EVEDLQVRDVELAGAPGEGGLQPLALEGALQ.

This sequence belongs to the insulin family. Heterodimer of a B chain and an A chain linked by two disulfide bonds.

It is found in the secreted. Its function is as follows. Insulin decreases blood glucose concentration. It increases cell permeability to monosaccharides, amino acids and fatty acids. It accelerates glycolysis, the pentose phosphate cycle, and glycogen synthesis in liver. This chain is Insulin (INS), found in Canis lupus familiaris (Dog).